Reading from the N-terminus, the 206-residue chain is Sperm acrosome developmental regulator (206 aa).

Residues 180-206 (RRHHVRCHAAPRPNPAQSLKLDAQSPL) form a disordered region.

In terms of tissue distribution, expressed in sperm (at protein level).

The protein localises to the cytoplasmic vesicle. Its subcellular location is the secretory vesicle. The protein resides in the acrosome. Its function is as follows. May play a role in acrosome formation and nucleus shaping during spermiogenesis. The chain is Sperm acrosome developmental regulator from Homo sapiens (Human).